A 537-amino-acid chain; its full sequence is Apoptosis inhibitor 5-like protein API5 (537 aa).

The ARM-like and Heat-like helical repeats stretch occupies residues 9–363 (AEVERLYELG…TTNSLCGYKI (355 aa)). The segment at 465-537 (WMEQPKKPAP…GGRGRGWGYR (73 aa)) is disordered. Polar residues predominate over residues 474 to 492 (PTTTGGKRSQPATNGNTPA).

This sequence belongs to the API5 family. As to quaternary structure, interacts with AIP1 and AIP2.

It is found in the nucleus. Functionally, putative anti-apoptotic factor involved in the regulation of tapetal programmed cell death (PCD) and degeneration during anther development. Interacts directly with the DEAD-box ATP-dependent RNA helicases AIP1 and AIP2 that form dimers and bind the promoter region of the cysteine protease CP1 involved in tapetum PCD. The sequence is that of Apoptosis inhibitor 5-like protein API5 from Oryza sativa subsp. japonica (Rice).